A 200-amino-acid polypeptide reads, in one-letter code: Ras-related protein Rab-10 (200 aa).

Residues Ser18, Gly19, Val20, Gly21, Lys22, Thr23, Cys24, Asn35, Thr36, Ser40, and Thr41 each contribute to the GTP site. Thr23 contacts Mg(2+). 2 short sequence motifs (switch) span residues 32 to 46 and 64 to 81; these read DAFNTTFISTIEIDF and DTAGQERFHTITTSYYRG. Residues Thr41 and Asp64 each coordinate Mg(2+). GTP is bound at residue Gly67. Thr73 carries the post-translational modification Phosphothreonine. N6-acetyllysine is present on Lys102. Residue Lys102 forms a Glycyl lysine isopeptide (Lys-Gly) (interchain with G-Cter in ubiquitin) linkage. GTP is bound by residues Asn122, Lys123, Asp125, and Met126. A Glycyl lysine isopeptide (Lys-Gly) (interchain with G-Cter in ubiquitin) cross-link involves residue Lys136. Residues Ser152, Ala153, and Lys154 each coordinate GTP. A Glycyl lysine isopeptide (Lys-Gly) (interchain with G-Cter in ubiquitin) cross-link involves residue Lys154. Residues Cys199 and Cys200 are each lipidated (S-geranylgeranyl cysteine).

It belongs to the small GTPase superfamily. Rab family. In terms of assembly, interacts with MYO5A; mediates the transport to the plasma membrane of SLC2A4/GLUT4 storage vesicles. Interacts with GDI1 and with GDI2; negatively regulates RAB10 association with membranes and activation. Interacts (GDP-bound form) with LLGL1; the interaction is direct and promotes RAB10 association with membranes and activation through competition with the Rab inhibitor GDI1. Interacts with EXOC4; probably associates with the exocyst. Interacts (GTP-bound form) with MICALCL, MICAL1, MICAL3, EHBP1 and EHBP1L1; at least in case of MICAL1 two molecules of RAB10 can bind to one molecule of MICAL1. Interacts with TBC1D13. Interacts with SEC16A. Interacts with CHM. Interacts with LRRK2; interaction facilitates phosphorylation of Thr-73. Interacts with RILPL1 and RILPL2 when phosphorylated on Thr-73. Interacts with TBC1D21. Interacts with MARCKS. Mg(2+) is required as a cofactor. In terms of processing, phosphorylation of Thr-73 in the switch II region by LRRK2 prevents the association of RAB regulatory proteins, including CHM and RAB GDP dissociation inhibitors GDI1 and GDI2. Phosphorylation of Thr-73 by LRRK2 is stimulated by RAB29 and RAB32. Phosphorylation by LRRK2 is required for localization to stressed lysosomes. As to expression, highest levels in neural and muscle tissues.

Its subcellular location is the cytoplasmic vesicle membrane. It localises to the golgi apparatus. The protein localises to the trans-Golgi network membrane. The protein resides in the endosome membrane. It is found in the recycling endosome membrane. Its subcellular location is the cytoplasmic vesicle. It localises to the phagosome membrane. The protein localises to the cell projection. The protein resides in the cilium. It is found in the endoplasmic reticulum membrane. Its subcellular location is the cytoplasm. It localises to the perinuclear region. The protein localises to the lysosome. It catalyses the reaction GTP + H2O = GDP + phosphate + H(+). With respect to regulation, regulated by guanine nucleotide exchange factors (GEFs) DENND4C and RABIF which promote the exchange of bound GDP for free GTP. Regulated by GTPase activating proteins (GAPs) including TBC1D21 which increase the GTP hydrolysis activity. Inhibited by GDP dissociation inhibitors GDI1 and GDI2 which prevent Rab-GDP dissociation. Functionally, the small GTPases Rab are key regulators of intracellular membrane trafficking, from the formation of transport vesicles to their fusion with membranes. Rabs cycle between an inactive GDP-bound form and an active GTP-bound form that is able to recruit to membranes different set of downstream effectors directly responsible for vesicle formation, movement, tethering and fusion. That Rab is mainly involved in the biosynthetic transport of proteins from the Golgi to the plasma membrane. Regulates, for instance, SLC2A4/GLUT4 glucose transporter-enriched vesicles delivery to the plasma membrane. In parallel, it regulates the transport of TLR4, a toll-like receptor to the plasma membrane and therefore may be important for innate immune response. Also plays a specific role in asymmetric protein transport to the plasma membrane. In neurons, it is involved in axonogenesis through regulation of vesicular membrane trafficking toward the axonal plasma membrane. In epithelial cells, it regulates transport from the Golgi to the basolateral membrane. May play a role in the basolateral recycling pathway and in phagosome maturation. May play a role in endoplasmic reticulum dynamics and morphology controlling tubulation along microtubules and tubules fusion. Together with LRRK2, RAB8A, and RILPL1, it regulates ciliogenesis. When phosphorylated by LRRK2 on Thr-73, it binds RILPL1 and inhibits ciliogenesis. Participates in the export of a subset of neosynthesized proteins through a Rab8-Rab10-Rab11-dependent endososomal export route. Targeted to and stabilized on stressed lysosomes through LRRK2 phosphorylation where it promotes the extracellular release of lysosomal content through EHBP1 and EHNP1L1 effector proteins. This is Ras-related protein Rab-10 from Rattus norvegicus (Rat).